Consider the following 178-residue polypeptide: Nucleoside triphosphate/diphosphate phosphatase (178 aa).

The active-site Proton donor is R23. N87, D103, D105, D107, D120, and E123 together coordinate Mg(2+).

The protein belongs to the Ntdp family. The cofactor is Mg(2+).

It catalyses the reaction a ribonucleoside 5'-triphosphate + H2O = a ribonucleoside 5'-diphosphate + phosphate + H(+). The catalysed reaction is a ribonucleoside 5'-diphosphate + H2O = a ribonucleoside 5'-phosphate + phosphate + H(+). In terms of biological role, has nucleoside phosphatase activity towards nucleoside triphosphates and nucleoside diphosphates. In Latilactobacillus sakei subsp. sakei (strain 23K) (Lactobacillus sakei subsp. sakei), this protein is Nucleoside triphosphate/diphosphate phosphatase.